We begin with the raw amino-acid sequence, 206 residues long: Cytochrome c oxidase subunit 3 (206 aa).

Transmembrane regions (helical) follow at residues 26–46, 68–88, 97–117, 143–163, and 185–205; these read FLGF…FFGT, LVFI…LAMF, AMMI…GFEI, LVGL…VLLI, and WHFI…MGVG.

The protein belongs to the cytochrome c oxidase subunit 3 family.

It localises to the cell membrane. The catalysed reaction is 4 Fe(II)-[cytochrome c] + O2 + 8 H(+)(in) = 4 Fe(III)-[cytochrome c] + 2 H2O + 4 H(+)(out). The sequence is that of Cytochrome c oxidase subunit 3 (ctaE) from Alkalihalophilus pseudofirmus (strain ATCC BAA-2126 / JCM 17055 / OF4) (Bacillus pseudofirmus).